A 152-amino-acid chain; its full sequence is AIG2-like protein D (152 aa).

Residue 13–18 (YGSLMA) coordinates substrate. The active-site Proton acceptor is Glu-81.

This sequence belongs to the gamma-glutamylcyclotransferase family. As to expression, expressed mainly in leaves.

Functionally, putative gamma-glutamylcyclotransferase. In Arabidopsis thaliana (Mouse-ear cress), this protein is AIG2-like protein D.